The primary structure comprises 127 residues: Aspartate 1-decarboxylase (127 aa).

Ser-25 acts as the Schiff-base intermediate with substrate; via pyruvic acid in catalysis. At Ser-25 the chain carries Pyruvic acid (Ser). Thr-57 lines the substrate pocket. The active-site Proton donor is Tyr-58. Residue 73-75 (GAA) coordinates substrate.

Belongs to the PanD family. As to quaternary structure, heterooctamer of four alpha and four beta subunits. Requires pyruvate as cofactor. In terms of processing, is synthesized initially as an inactive proenzyme, which is activated by self-cleavage at a specific serine bond to produce a beta-subunit with a hydroxyl group at its C-terminus and an alpha-subunit with a pyruvoyl group at its N-terminus.

It localises to the cytoplasm. It catalyses the reaction L-aspartate + H(+) = beta-alanine + CO2. It functions in the pathway cofactor biosynthesis; (R)-pantothenate biosynthesis; beta-alanine from L-aspartate: step 1/1. Catalyzes the pyruvoyl-dependent decarboxylation of aspartate to produce beta-alanine. This Halalkalibacterium halodurans (strain ATCC BAA-125 / DSM 18197 / FERM 7344 / JCM 9153 / C-125) (Bacillus halodurans) protein is Aspartate 1-decarboxylase.